The primary structure comprises 780 residues: Tyrosine-protein phosphatase non-receptor type 12 (780 aa).

Met-1 carries the N-acetylmethionine modification. Position 19 is a phosphoserine (Ser-19). Positions 28–293 (FARDFMRLRR…ELVHRAIAQL (266 aa)) constitute a Tyrosine-protein phosphatase domain. Residues Arg-36, 63–67 (RYKDI), Asp-199, 231–237 (CSAGCGR), and Gln-278 each bind substrate. The Phosphocysteine intermediate role is filled by Cys-231. 4 positions are modified to phosphoserine: Ser-332, Ser-435, Ser-449, and Ser-468. The interaction with TGFB1I1 stretch occupies residues 345–438 (VEGDAKEEIL…KLERNLSFEI (94 aa)). Residues 502 to 519 (QSNKVSVTPPEESQNSDT) show a composition bias toward polar residues. 3 disordered regions span residues 502–639 (QSNK…STES), 657–725 (GTTH…EKCD), and 744–780 (SDKR…SEWT). Thr-509 and Thr-519 each carry phosphothreonine. Basic and acidic residues predominate over residues 521–533 (PRPDRLPLDEKGH). Composition is skewed to polar residues over residues 552-577 (EGNS…TQVE) and 587-601 (TSPL…TNPL). Ser-567 is modified (phosphoserine). Phosphothreonine is present on Thr-569. Residues Ser-571 and Ser-596 each carry the phosphoserine modification. Thr-598 carries the phosphothreonine modification. The span at 602–613 (HSDDSDSDERNS) shows a compositional bias: basic and acidic residues. A phosphoserine mark is found at Ser-603, Ser-606, Ser-608, and Ser-613. Low complexity predominate over residues 622–639 (TNISTASATVSAATSTES). 2 positions are modified to phosphoserine: Ser-673 and Ser-689. Over residues 690-703 (EHNTPVRSEWSELQ) the composition is skewed to polar residues. Thr-693 bears the Phosphothreonine mark. Basic and acidic residues-rich tracts occupy residues 704–725 (SQER…EKCD) and 771–780 (GPRDPPSEWT).

This sequence belongs to the protein-tyrosine phosphatase family. Non-receptor class 4 subfamily. Interacts with TGFB1I1. Interacts with PSTPIP1. Interacts with PTK2B/PYK2. Interacts with LPXN. Interacts with SORBS2; this interaction greatly enhances WASF1 dephosphorylation and might mediate partial translocation to focal adhesion sites. Phosphorylated by STK24/MST3 and this results in inhibition of its activity.

The protein resides in the cytoplasm. It localises to the cell junction. Its subcellular location is the focal adhesion. It is found in the cell projection. The protein localises to the podosome. It catalyses the reaction O-phospho-L-tyrosyl-[protein] + H2O = L-tyrosyl-[protein] + phosphate. Dephosphorylates a range of proteins, and thereby regulates cellular signaling cascades. Dephosphorylates cellular tyrosine kinases, such as ERBB2 and PTK2B/PYK2, and thereby regulates signaling via ERBB2 and PTK2B/PYK2. Selectively dephosphorylates ERBB2 phosphorylated at 'Tyr-1112', 'Tyr-1196', and/or 'Tyr-1248'. This Homo sapiens (Human) protein is Tyrosine-protein phosphatase non-receptor type 12 (PTPN12).